The chain runs to 120 residues: ESAT-6-like protein EsxQ (120 aa).

This sequence belongs to the WXG100 family. ESAT-6 subfamily.

Its subcellular location is the secreted. The sequence is that of ESAT-6-like protein EsxQ from Mycobacterium bovis (strain ATCC BAA-935 / AF2122/97).